A 332-amino-acid chain; its full sequence is MLSIVYPSWIRPEIIPSFPYFRWYGFMYVVAFSIAYILFRYQVRRGELDKWSRVSEPVTQDDIMSFFTWTILGILIGARVFSTMVYEVDLLYMRKPWLIFWPFSLQTGEWVGLRGMSYHGGLIGALVGGGLWTQSHGRSFLAWADVAAASTPLGYTFGRIGNFLNAELYGRITDIPIGMIFPNVPLSDMFPASEPWVREFAQRVGIHVQEGARLVNLPRHPSQIYEAFFEGIVLWCILWCARRVKTYNGFLVCLYVVGYGVFRFFIEYFRQPDAHLGYRFSATQSSPIYLFQSWSDVSTGQILCVLMILAGLGGMFALSAYHKRDSVRKARV.

3 helical membrane passes run 18 to 38, 66 to 86, and 111 to 131; these read FPYF…AYIL, FFTW…TMVY, and VGLR…GGGL. Arginine 159 contacts a 1,2-diacyl-sn-glycero-3-phospho-(1'-sn-glycerol). A run of 2 helical transmembrane segments spans residues 249–269 and 302–322; these read GFLV…IEYF and ILCV…SAYH.

It belongs to the Lgt family.

Its subcellular location is the cell inner membrane. The catalysed reaction is L-cysteinyl-[prolipoprotein] + a 1,2-diacyl-sn-glycero-3-phospho-(1'-sn-glycerol) = an S-1,2-diacyl-sn-glyceryl-L-cysteinyl-[prolipoprotein] + sn-glycerol 1-phosphate + H(+). It participates in protein modification; lipoprotein biosynthesis (diacylglyceryl transfer). Its function is as follows. Catalyzes the transfer of the diacylglyceryl group from phosphatidylglycerol to the sulfhydryl group of the N-terminal cysteine of a prolipoprotein, the first step in the formation of mature lipoproteins. In Treponema pallidum (strain Nichols), this protein is Phosphatidylglycerol--prolipoprotein diacylglyceryl transferase.